The sequence spans 1347 residues: Neurofascin (1347 aa).

A signal peptide spans 1–24 (MARQPPPPWVHAAFLLCLLSLGGA). Residues 25–1217 (IEIPMDPSIQ…NQADIATQGW (1193 aa)) lie on the Extracellular side of the membrane. 6 consecutive Ig-like C2-type domains span residues 41-137 (PTIT…LQVS), 143-230 (PKEN…NPFT), 244-332 (PSFM…ISVR), 337-424 (PYWL…AFVS), 429-517 (PPRM…VRLE), and 521-603 (PTRI…QDLA). 4 cysteine pairs are disulfide-bonded: Cys-63–Cys-118, Cys-162–Cys-213, Cys-268–Cys-316, and Cys-358–Cys-408. N-linked (GlcNAc...) asparagine glycosylation occurs at Asn-305. Asn-409 and Asn-446 each carry an N-linked (GlcNAc...) asparagine glycan. Disulfide bonds link Cys-452–Cys-501 and Cys-543–Cys-592. Tyr-481 carries the phosphotyrosine modification. Asn-483 is a glycosylation site (N-linked (GlcNAc...) asparagine). Ser-485 carries the phosphoserine modification. Fibronectin type-III domains follow at residues 630 to 725 (RPRD…TSGA), 730 to 823 (NPGD…SGED), 828 to 930 (APTE…TPEG), and 934 to 1030 (APRR…PNEA). Positions 713–740 (PSLPSERYRTSGAPPESNPGDVKGEGTR) are disordered. 2 N-linked (GlcNAc...) asparagine glycosylation sites follow: Asn-752 and Asn-778. The tract at residues 915 to 934 (GDGPRSETKEFTTPEGVPSA) is disordered. The segment covering 916–926 (DGPRSETKEFT) has biased composition (basic and acidic residues). Asn-973 and Asn-988 each carry an N-linked (GlcNAc...) asparagine glycan. Disordered regions lie at residues 1011–1040 (TQVG…PTLP) and 1090–1111 (TTAA…TKIH). Pro residues predominate over residues 1024 to 1040 (PAPPNEATPTAAPPTLP). Over residues 1090–1105 (TTAAATTTTESPPTTT) the composition is skewed to low complexity. Positions 1114-1206 (APDEQSIWNV…ITFMTSTAYT (93 aa)) constitute a Fibronectin type-III 5 domain. The chain crosses the membrane as a helical span at residues 1218–1238 (FIGLMCAIALLVLILLIVCFI). The Cytoplasmic segment spans residues 1239-1347 (KRSRGGKYPV…SPVNAIYSLA (109 aa)). The segment at 1248 to 1347 (VREKKDVPLG…SPVNAIYSLA (100 aa)) is disordered. Positions 1261–1272 (PKEEDGSFDYSD) are enriched in acidic residues. 7 positions are modified to phosphoserine: Ser-1267, Ser-1281, Ser-1294, Ser-1297, Ser-1333, Ser-1334, and Ser-1338. Over residues 1278–1291 (LQGSQTSLDGTIKQ) the composition is skewed to polar residues.

The protein belongs to the immunoglobulin superfamily. L1/neurofascin/NgCAM family. As to quaternary structure, horseshoe-shaped homodimer. Probable constituent of a NFASC/NRCAM/ankyrin-G complex. Associates with the sodium channel beta-1 (SCN1B) and beta-3 (SCN3B) subunits. Interacts with GLDN/gliomedin. Interacts with MYOC.

The protein localises to the cell membrane. Its subcellular location is the cell junction. It is found in the paranodal septate junction. Functionally, cell adhesion, ankyrin-binding protein which may be involved in neurite extension, axonal guidance, synaptogenesis, myelination and neuron-glial cell interactions. This chain is Neurofascin (NFASC), found in Homo sapiens (Human).